Consider the following 198-residue polypeptide: Virion membrane protein A17 precursor homolog (198 aa).

Residues 1–55 lie on the Virion surface side of the membrane; it reads MDNNYLNYYNVFEEFDAGAGIKEKELFTEEQQLSFLPKKGLGNGGFDGVERLYSN. The chain crosses the membrane as a helical span at residues 56–76; that stretch reads IINNNDIKSLLALIMLVFAIN. Residues 77-145 lie on the Intravirion side of the membrane; it reads TNSLVALIFI…TSKISKGFKR (69 aa). The helical transmembrane segment at 146–166 threads the bilayer; it reads AIDVVLLVILGFYIVKIYGID. The Virion surface segment spans residues 167–198; that stretch reads RQISIPSRRYCRQMSGPSSLENLNAFQTHSNY. A Phosphotyrosine modification is found at Tyr198.

The protein belongs to the chordopoxvirinae A17 family. As to quaternary structure, interacts (via N-terminus) with D13 scaffold; this interaction helps D13 to associate with membranes. Interacts with A14. Interacts with A27; this interaction allows A27 to be anchored in the mature virion (MV) membrane. Part of a complex composed of A17, A25, A26 and A27. Post-translationally, the 22 kDa precursor is probably cleaved by the I7 protease during virus maturation. Phosphorylated on tyrosine and threonine. Its phosphorylation state is regulated by the F10 kinase and the H1 phosphatase. Phosphorylation by F10 kinase seems to be required to form the membranes associated with IV.

The protein localises to the virion membrane. Envelope protein which participates in virus morphogenesis. Needed for an early step in viral crescent membrane formation by interacting with D13 scaffold protein. Its interaction with D13 scaffold protein leads to the formation of rigid, crescent-shaped membranes that assemble around the cytoplasmic virus factory. Membrane anchor for the protein A27. A17-A27 virus envelope protein might be involved in fusion or attachment, and can further associate to A26. The polypeptide is Virion membrane protein A17 precursor homolog (Fowlpox virus (strain NVSL) (FPV)).